We begin with the raw amino-acid sequence, 431 residues long: Glutamyl-tRNA(Gln) amidotransferase subunit A (431 aa).

Catalysis depends on charge relay system residues Lys55 and Ser130. Catalysis depends on Ser154, which acts as the Acyl-ester intermediate.

This sequence belongs to the amidase family. GatA subfamily. As to quaternary structure, heterotrimer of A, B and C subunits.

It carries out the reaction L-glutamyl-tRNA(Gln) + L-glutamine + ATP + H2O = L-glutaminyl-tRNA(Gln) + L-glutamate + ADP + phosphate + H(+). In terms of biological role, allows the formation of correctly charged Gln-tRNA(Gln) through the transamidation of misacylated Glu-tRNA(Gln) in organisms which lack glutaminyl-tRNA synthetase. The reaction takes place in the presence of glutamine and ATP through an activated gamma-phospho-Glu-tRNA(Gln). The chain is Glutamyl-tRNA(Gln) amidotransferase subunit A from Methanococcus maripaludis (strain C6 / ATCC BAA-1332).